The primary structure comprises 631 residues: Putative ATP-dependent DNA helicase Q1 (631 aa).

One can recognise a Helicase ATP-binding domain in the interval 118-293 (INAVMSKEDA…KDMLGIQAAL (176 aa)). ATP is bound at residue 131–138 (LSTGGGKS). Positions 237 to 240 (DEVH) match the DEVH box motif. A Helicase C-terminal domain is found at 318-466 (CTEEIAKTIK…NLYNMVRYAA (149 aa)). Residues cysteine 471, cysteine 489, cysteine 493, and cysteine 496 each contribute to the Zn(2+) site. Positions 610–631 (ESKSRKRKASSSVEEEDVMVLD) are disordered. The span at 622–631 (VEEEDVMVLD) shows a compositional bias: acidic residues.

It belongs to the helicase family. RecQ subfamily. The cofactor is Zn(2+).

Its subcellular location is the nucleus. The enzyme catalyses Couples ATP hydrolysis with the unwinding of duplex DNA by translocating in the 3'-5' direction.. It catalyses the reaction ATP + H2O = ADP + phosphate + H(+). Its function is as follows. DNA helicase that may play a role in the repair of DNA that is damaged by ultraviolet light or other mutagens. Exhibits a magnesium-dependent ATP-dependent DNA-helicase activity that unwinds single- and double-stranded DNA in a 3'-5' direction. This Caenorhabditis elegans protein is Putative ATP-dependent DNA helicase Q1.